A 250-amino-acid chain; its full sequence is UDP-2,3-diacylglucosamine hydrolase (250 aa).

The Mn(2+) site is built by Asp8, His10, Asp41, Asn79, and His114. Position 79–80 (79–80) interacts with substrate; that stretch reads NR. The substrate site is built by Asp122, Ser160, Gln167, and His195. Residues His195 and His197 each contribute to the Mn(2+) site.

It belongs to the LpxH family. Requires Mn(2+) as cofactor.

The protein localises to the cell inner membrane. It carries out the reaction UDP-2-N,3-O-bis[(3R)-3-hydroxytetradecanoyl]-alpha-D-glucosamine + H2O = 2-N,3-O-bis[(3R)-3-hydroxytetradecanoyl]-alpha-D-glucosaminyl 1-phosphate + UMP + 2 H(+). It functions in the pathway glycolipid biosynthesis; lipid IV(A) biosynthesis; lipid IV(A) from (3R)-3-hydroxytetradecanoyl-[acyl-carrier-protein] and UDP-N-acetyl-alpha-D-glucosamine: step 4/6. Functionally, hydrolyzes the pyrophosphate bond of UDP-2,3-diacylglucosamine to yield 2,3-diacylglucosamine 1-phosphate (lipid X) and UMP by catalyzing the attack of water at the alpha-P atom. Involved in the biosynthesis of lipid A, a phosphorylated glycolipid that anchors the lipopolysaccharide to the outer membrane of the cell. The chain is UDP-2,3-diacylglucosamine hydrolase from Nitrosococcus oceani (strain ATCC 19707 / BCRC 17464 / JCM 30415 / NCIMB 11848 / C-107).